A 172-amino-acid polypeptide reads, in one-letter code: Large ribosomal subunit protein uL10 (172 aa).

Belongs to the universal ribosomal protein uL10 family. Part of the ribosomal stalk of the 50S ribosomal subunit. The N-terminus interacts with L11 and the large rRNA to form the base of the stalk. The C-terminus forms an elongated spine to which L12 dimers bind in a sequential fashion forming a multimeric L10(L12)X complex.

Functionally, forms part of the ribosomal stalk, playing a central role in the interaction of the ribosome with GTP-bound translation factors. The polypeptide is Large ribosomal subunit protein uL10 (Rhizobium etli (strain ATCC 51251 / DSM 11541 / JCM 21823 / NBRC 15573 / CFN 42)).